A 115-amino-acid polypeptide reads, in one-letter code: T cell receptor beta variable 12-5 (115 aa).

An N-terminal signal peptide occupies residues 1–21 (MATRLLCCVVLCLLGEELIDA). The Ig-like domain maps to 22–115 (RVTQTPRHKV…SAVYFCASGL (94 aa)). A disulfide bridge connects residues cysteine 42 and cysteine 111.

Alpha-beta TR is a heterodimer composed of an alpha and beta chain; disulfide-linked. The alpha-beta TR is associated with the transmembrane signaling CD3 coreceptor proteins to form the TR-CD3 (TcR or TCR). The assembly of alpha-beta TR heterodimers with CD3 occurs in the endoplasmic reticulum where a single alpha-beta TR heterodimer associates with one CD3D-CD3E heterodimer, one CD3G-CD3E heterodimer and one CD247 homodimer forming a stable octameric structure. CD3D-CD3E and CD3G-CD3E heterodimers preferentially associate with TR alpha and TR beta chains, respectively. The association of the CD247 homodimer is the last step of TcR assembly in the endoplasmic reticulum and is required for transport to the cell surface.

It localises to the cell membrane. Its function is as follows. V region of the variable domain of T cell receptor (TR) beta chain that participates in the antigen recognition. Alpha-beta T cell receptors are antigen specific receptors which are essential to the immune response and are present on the cell surface of T lymphocytes. Recognize peptide-major histocompatibility (MH) (pMH) complexes that are displayed by antigen presenting cells (APC), a prerequisite for efficient T cell adaptive immunity against pathogens. Binding of alpha-beta TR to pMH complex initiates TR-CD3 clustering on the cell surface and intracellular activation of LCK that phosphorylates the ITAM motifs of CD3G, CD3D, CD3E and CD247 enabling the recruitment of ZAP70. In turn ZAP70 phosphorylates LAT, which recruits numerous signaling molecules to form the LAT signalosome. The LAT signalosome propagates signal branching to three major signaling pathways, the calcium, the mitogen-activated protein kinase (MAPK) kinase and the nuclear factor NF-kappa-B (NF-kB) pathways, leading to the mobilization of transcription factors that are critical for gene expression and essential for T cell growth and differentiation. The T cell repertoire is generated in the thymus, by V-(D)-J rearrangement. This repertoire is then shaped by intrathymic selection events to generate a peripheral T cell pool of self-MH restricted, non-autoaggressive T cells. Post-thymic interaction of alpha-beta TR with the pMH complexes shapes TR structural and functional avidity. In Homo sapiens (Human), this protein is T cell receptor beta variable 12-5.